The sequence spans 257 residues: Triosephosphate isomerase (257 aa).

Substrate is bound by residues N11 and K13. H96 (electrophile) is an active-site residue. The Proton acceptor role is filled by E170.

Belongs to the triosephosphate isomerase family. In terms of assembly, homodimer.

It carries out the reaction D-glyceraldehyde 3-phosphate = dihydroxyacetone phosphate. It functions in the pathway carbohydrate biosynthesis; gluconeogenesis. The protein operates within carbohydrate degradation; glycolysis; D-glyceraldehyde 3-phosphate from glycerone phosphate: step 1/1. The chain is Triosephosphate isomerase from Giardia intestinalis (Giardia lamblia).